Reading from the N-terminus, the 1634-residue chain is Phosphatidylinositol 4-phosphate 3-kinase C2 domain-containing subunit beta (1634 aa).

Positions 2 to 298 (SSTQGNGEHW…YASRYGNRKN (297 aa)) are interaction with GRB2. 2 disordered regions span residues 45 to 188 (EENR…QPSD) and 259 to 315 (GRGP…VGSR). Residues 87–112 (SDPTLNYNSLSPQEGPPNHSTSQGPQ) are compositionally biased toward polar residues. A compositionally biased stretch (low complexity) spans 176–187 (GSPSSSKISQPS). Basic and acidic residues predominate over residues 259-270 (GRGPLDFSKDTS). A PI3K-RBD domain is found at 375–463 (EVNLKVTVLC…DIDIRLQLME (89 aa)). Positions 635–786 (VYATHRIPII…DSVILQIDFP (152 aa)) constitute a C2 PI3K-type domain. Residues 805–981 (RYEFGSLREE…QYLLAALLCC (177 aa)) form the PIK helical domain. The PI3K/PI4K catalytic domain occupies 1050–1328 (VPRDCSYFNS…LIESSLGSVA (279 aa)). A G-loop region spans residues 1056–1062 (YFNSNAV). The tract at residues 1192–1200 (GICDRHNDN) is catalytic loop. Residues 1211 to 1237 (HIDFGRFLGHAQMFGNIKRDRAPFVFT) form an activation loop region. The PX domain occupies 1365–1481 (GRISDVFLCR…TFFHPLPRDE (117 aa)). The 121-residue stretch at 1504–1624 (VGGEVKLSIS…DLAQEKTGWF (121 aa)) folds into the C2 domain.

Belongs to the PI3/PI4-kinase family. In terms of assembly, part of a complex with ERBB2 and EGFR. Part of a complex with phosphorylated EGFR and GRB2. Interacts with phosphorylated EGFR and PDGFR, maybe indirectly. Interacts with GRB2. Ca(2+) is required as a cofactor. Requires Mg(2+) as cofactor. It depends on Mn(2+) as a cofactor. Expressed in columnar and transitional epithelia, mononuclear cells, and ganglion cells (at protein level). Widely expressed, with highest levels in thymus and placenta and lowest in peripheral blood, skeletal muscle and kidney.

The protein localises to the microsome. It localises to the cell membrane. Its subcellular location is the cytoplasm. The protein resides in the cytosol. It is found in the nucleus. The protein localises to the endoplasmic reticulum. The enzyme catalyses a 1,2-diacyl-sn-glycero-3-phospho-(1D-myo-inositol 4-phosphate) + ATP = a 1,2-diacyl-sn-glycero-3-phospho-(1D-myo-inositol-3,4-bisphosphate) + ADP + H(+). It catalyses the reaction a 1,2-diacyl-sn-glycero-3-phospho-(1D-myo-inositol) + ATP = a 1,2-diacyl-sn-glycero-3-phospho-(1D-myo-inositol-3-phosphate) + ADP + H(+). With respect to regulation, activated by GRB2. In terms of biological role, phosphorylates PtdIns and PtdIns4P with a preference for PtdIns. Does not phosphorylate PtdIns(4,5)P2. May be involved in EGF and PDGF signaling cascades. The chain is Phosphatidylinositol 4-phosphate 3-kinase C2 domain-containing subunit beta (PIK3C2B) from Homo sapiens (Human).